Consider the following 967-residue polypeptide: Nonsense-mediated mRNA decay factor SMG8 (967 aa).

Residues 627–702 (LNEGEDADAD…SCPESQSVAS (76 aa)) are disordered. Acidic residues predominate over residues 628 to 639 (NEGEDADADADS). Positions 643–666 (RSQICSSGQSSRSRSNSSSSDTSS) are enriched in low complexity. The segment covering 686 to 702 (ATEALSESCPESQSVAS) has biased composition (polar residues).

It belongs to the SMG8 family.

Functionally, involved in nonsense-mediated decay (NMD) of mRNAs containing premature stop codons. Probable component of kinase complex containing nonC and recruited to stalled ribosomes. This chain is Nonsense-mediated mRNA decay factor SMG8, found in Drosophila mojavensis (Fruit fly).